The following is a 302-amino-acid chain: MRIVFMGTPDYATTILEGLLEKFEVVGVFTQPDKPVGRKQVVTPPHVKKFLIEKNVDIPIFQPSTLKSEEVYEQLHTLAPDFIVVAAYGQILPKEILQLAPCINLHASLLPKYRGASPIQHALLNGDTVTGVTAMLMDEGLDTGDILAYDVIDIQNSDNAITLFEKLSHLAKELTPKVLQSFENIAPIAQHDVDASYCKKIRKQDGQIRFSDAKVIWNKYRAFIVWPGIFLENGLKLKEIDLVETDNTHEEGKILEISDAGVVVGCRRGSICIKSVQPPSKKAMEAVAYLRGKRLKVGDTFF.

A (6S)-5,6,7,8-tetrahydrofolate-binding site is contributed by serine 108–proline 111.

Belongs to the Fmt family.

The enzyme catalyses L-methionyl-tRNA(fMet) + (6R)-10-formyltetrahydrofolate = N-formyl-L-methionyl-tRNA(fMet) + (6S)-5,6,7,8-tetrahydrofolate + H(+). Attaches a formyl group to the free amino group of methionyl-tRNA(fMet). The formyl group appears to play a dual role in the initiator identity of N-formylmethionyl-tRNA by promoting its recognition by IF2 and preventing the misappropriation of this tRNA by the elongation apparatus. The polypeptide is Methionyl-tRNA formyltransferase (Nitratiruptor sp. (strain SB155-2)).